The primary structure comprises 166 residues: 3-dehydroquinate dehydratase (166 aa).

The Proton acceptor role is filled by Y22. Substrate-binding residues include N73, H79, and D86. Catalysis depends on H99, which acts as the Proton donor. Substrate contacts are provided by residues 100 to 101 (IT) and R110.

This sequence belongs to the type-II 3-dehydroquinase family. Homododecamer.

It catalyses the reaction 3-dehydroquinate = 3-dehydroshikimate + H2O. Its pathway is metabolic intermediate biosynthesis; chorismate biosynthesis; chorismate from D-erythrose 4-phosphate and phosphoenolpyruvate: step 3/7. Functionally, catalyzes a trans-dehydration via an enolate intermediate. The protein is 3-dehydroquinate dehydratase of Wolinella succinogenes (strain ATCC 29543 / DSM 1740 / CCUG 13145 / JCM 31913 / LMG 7466 / NCTC 11488 / FDC 602W) (Vibrio succinogenes).